The sequence spans 222 residues: 3-demethoxyubiquinol 3-hydroxylase (222 aa).

Residues E71, E101, H104, E153, E185, and H188 each contribute to the Fe cation site.

It belongs to the COQ7 family. It depends on Fe cation as a cofactor.

Its subcellular location is the cell membrane. The enzyme catalyses a 5-methoxy-2-methyl-3-(all-trans-polyprenyl)benzene-1,4-diol + AH2 + O2 = a 3-demethylubiquinol + A + H2O. Its pathway is cofactor biosynthesis; ubiquinone biosynthesis. Functionally, catalyzes the hydroxylation of 2-nonaprenyl-3-methyl-6-methoxy-1,4-benzoquinol during ubiquinone biosynthesis. This Bordetella pertussis (strain Tohama I / ATCC BAA-589 / NCTC 13251) protein is 3-demethoxyubiquinol 3-hydroxylase.